We begin with the raw amino-acid sequence, 217 residues long: NAD(P)H-quinone oxidoreductase subunit M, chloroplastic (217 aa).

A chloroplast-targeting transit peptide spans 1–21 (MVAAFSYTACTKLSLLHPSMV). Residues 48 to 67 (ETETLKEEQSTEKMKKQPTP) form a disordered region. Positions 50-62 (ETLKEEQSTEKMK) are enriched in basic and acidic residues.

It belongs to the NDH complex subunit M family. In terms of assembly, part of the chloroplast NDH complex, composed of a mixture of chloroplast and nucleus encoded subunits. Component of the NDH subcomplex A, at least composed of ndhH, ndhI, ndhJ, ndhK, ndhL, ndhM, ndhN and ndhO.

It is found in the plastid. It localises to the chloroplast thylakoid membrane. It catalyses the reaction a plastoquinone + NADH + (n+1) H(+)(in) = a plastoquinol + NAD(+) + n H(+)(out). It carries out the reaction a plastoquinone + NADPH + (n+1) H(+)(in) = a plastoquinol + NADP(+) + n H(+)(out). In terms of biological role, NDH shuttles electrons from NAD(P)H:plastoquinone, via FMN and iron-sulfur (Fe-S) centers, to quinones in the photosynthetic chain and possibly in a chloroplast respiratory chain. The immediate electron acceptor for the enzyme in this species is believed to be plastoquinone. Couples the redox reaction to proton translocation, and thus conserves the redox energy in a proton gradient. The chain is NAD(P)H-quinone oxidoreductase subunit M, chloroplastic from Arabidopsis thaliana (Mouse-ear cress).